Consider the following 489-residue polypeptide: Phosphoenolpyruvate carboxykinase (ATP) (489 aa).

Arg53 and Tyr159 together coordinate substrate. ATP-binding positions include His185, 208–216 (GLSGTGKTT), Asp258, Arg300, 409–410 (KI), and Ser415. Arg300 lines the substrate pocket.

Belongs to the phosphoenolpyruvate carboxykinase (ATP) family.

It is found in the cytoplasm. It catalyses the reaction oxaloacetate + ATP = phosphoenolpyruvate + ADP + CO2. The protein operates within carbohydrate biosynthesis; gluconeogenesis. Involved in the gluconeogenesis. Catalyzes the conversion of oxaloacetate (OAA) to phosphoenolpyruvate (PEP) through direct phosphoryl transfer between the nucleoside triphosphate and OAA. The chain is Phosphoenolpyruvate carboxykinase (ATP) from Aeropyrum pernix (strain ATCC 700893 / DSM 11879 / JCM 9820 / NBRC 100138 / K1).